The sequence spans 461 residues: Photosystem II CP43 reaction center protein (461 aa).

At 1 to 48 (MVTLSSNSIFATNRDQESSGFAWWAGNARLINLSGKLLGAHVAHAGLI) the chain is on the cytoplasmic side. A helical transmembrane segment spans residues 49–71 (VFWAGAMTLFELAHFIPEKPMYE). The Lumenal portion of the chain corresponds to 72-111 (QGLILIPHIATLGWGVGPGGEVVDTFPFFVVGVVHLISSA). The chain crosses the membrane as a helical span at residues 112–133 (VLGFGGVYHAIRGPETLEEYSS). At 134-155 (FFGYDWKDKNKMTTILGFHLIV) the chain is on the cytoplasmic side. Residues 156 to 178 (LGIGALLLVAKAMFFGGLYDTWA) traverse the membrane as a helical segment. Over 179–232 (PGGGDVRVITNPTLDPRVIFGYLLKSPFGGEGWIVSVNNLEDVVGGHIWIGLIC) the chain is Lumenal. The helical transmembrane segment at 233–253 (IAGGIWHILTTPFGWARRAFI) threads the bilayer. Residues 254–268 (WSGEAYLSYSLGALS) lie on the Cytoplasmic side of the membrane. A helical membrane pass occupies residues 269 to 289 (MMGFIATCFVWFNNTVYPSEF). Topologically, residues 290-424 (YGPTGPEASQ…ATSHFVLAFF (135 aa)) are lumenal. E355 is a [CaMn4O5] cluster binding site. The helical transmembrane segment at 425–449 (FLVGHLWHAGRARAAAAGFEKGIDR) threads the bilayer. Over 450-461 (ESEPVLSMPSLD) the chain is Cytoplasmic.

As to quaternary structure, PSII is composed of 1 copy each of membrane proteins PsbA, PsbB, PsbC, PsbD, PsbE, PsbF, PsbH, PsbI, PsbJ, PsbK, PsbL, PsbM, PsbT, PsbX, PsbY, PsbZ, Psb30/Ycf12, peripheral proteins PsbO, CyanoQ (PsbQ), PsbU, PsbV and a large number of cofactors. It forms dimeric complexes. Part of a photosystem II (PSII) assembly intermediate complex PSII-I; crystallized from a strain deleted of psbJ, it forms monomeric PSII before addition of the oxygen evolving complex. PSII-I includes 3 assembly factors not found in mature PSII (Psb27, Psb28 and Psb34), and CP43 (this protein) is not in its mature conformation. Binds multiple chlorophylls and provides some of the ligands for the Ca-4Mn-5O cluster of the oxygen-evolving complex. It may also provide a ligand for a Cl- that is required for oxygen evolution. PSII binds additional chlorophylls, carotenoids and specific lipids. serves as cofactor.

The protein localises to the cellular thylakoid membrane. Functionally, one of the components of the core complex of photosystem II (PSII). It binds chlorophyll and helps catalyze the primary light-induced photochemical processes of PSII. PSII is a light-driven water:plastoquinone oxidoreductase, using light energy to abstract electrons from H(2)O, generating O(2) and a proton gradient subsequently used for ATP formation. In Thermosynechococcus vestitus (strain NIES-2133 / IAM M-273 / BP-1), this protein is Photosystem II CP43 reaction center protein.